Reading from the N-terminus, the 403-residue chain is Indoleamine 2,3-dioxygenase 1 (403 aa).

A heme b-binding site is contributed by His346. A disordered region spans residues 360-381; sequence QQPKENKTSEDPSKLEAKGTGG. Basic and acidic residues predominate over residues 363 to 376; the sequence is KENKTSEDPSKLEA.

Belongs to the indoleamine 2,3-dioxygenase family. As to quaternary structure, monomer. The cofactor is heme b. Expressed in mature dendritic cells located in lymphoid organs (including lymph nodes, spleen, tonsils, Peyers's patches, the gut lamina propria, and the thymic medulla), in some epithelial cells of the female genital tract, as well as in endothelial cells of term placenta and in lung parenchyma. Weakly or not expressed in most normal tissues, but mostly inducible in most tissues. Expressed in more than 50% of tumors, either by tumoral, stromal, or endothelial cells (expression in tumor is associated with a worse clinical outcome). Not overexpressed in tumor-draining lymph nodes.

It localises to the cytoplasm. Its subcellular location is the cytosol. The enzyme catalyses D-tryptophan + O2 = N-formyl-D-kynurenine. It catalyses the reaction L-tryptophan + O2 = N-formyl-L-kynurenine. The protein operates within amino-acid degradation; L-tryptophan degradation via kynurenine pathway; L-kynurenine from L-tryptophan: step 1/2. Its activity is regulated as follows. Activity is inhibited by and MTH-trp (methylthiohydantoin-DL-tryptophan), modestly inhibited by L-1MT (1-methyl-L-tryptophan) but not D-1MT (1-methyl-D-tryptophan). Catalyzes the first and rate limiting step of the catabolism of the essential amino acid tryptophan along the kynurenine pathway. Involved in the peripheral immune tolerance, contributing to maintain homeostasis by preventing autoimmunity or immunopathology that would result from uncontrolled and overreacting immune responses. Tryptophan shortage inhibits T lymphocytes division and accumulation of tryptophan catabolites induces T-cell apoptosis and differentiation of regulatory T-cells. Acts as a suppressor of anti-tumor immunity. Limits the growth of intracellular pathogens by depriving tryptophan. Protects the fetus from maternal immune rejection. In Homo sapiens (Human), this protein is Indoleamine 2,3-dioxygenase 1.